A 486-amino-acid chain; its full sequence is Transcription enhancer factor-like protein egl-44 (486 aa).

Low complexity predominate over residues 47-57; sequence GTTTPTTTSGG. The segment at 47–87 is disordered; sequence GTTTPTTTSGGQMMTLSPPAGDGPGSAGSMAPESTSSLSDL. Residues 88 to 164 constitute a DNA-binding region (TEA); that stretch reads SGDAEGVWSI…QVLARKKLRD (77 aa). Residues 165–188 are disordered; the sequence is EQAKKKGDIPSLLQQASPPGGVKS.

As to quaternary structure, interacts (via N-terminus) with egl-46 (via C-terminus); the interaction is direct; the interaction may regulate transcription. Interacts with yap-1 (via WW domain); the interaction may regulate transcription. As to expression, expressed in HSN neurons in embryos and in the FLP neurons from the L1 stage through to adults. Not expressed in touch cells. Also expressed in larval hypodermis, intestine, pharyngeal muscle and other neurons. In adults expression is lost from some neurons, is weaker in the hypodermis but remains in the intestine. Expressed in HOB neuron, ray neurons RnA and RnB, and the ray structural cell, Rnst; rays are male-specific genital sensilla (simple sense organs).

Its subcellular location is the nucleus. Its function is as follows. Transcription factor. Binds to DNA sequence motif 5'-CATNNNNAAATGCAT-3' as a heterodimer with egl-46. Represses expression of genes involved in differentiation of touch receptor neurons (TRN), probably acting as a heterodimer with egl-46, perhaps by occupying similar cis-regulatory elements as an unc-86/mec-3 heterodimer. Plays a role in cell fate specification of neurons, including the hook neuron HOB, and touch receptor neurons. Involved in male mating behavior, acting in concert with egl-46, via modulation of expression of polycystins lov-1 and pkd-2, homeodomain protein ceh-26, and neuropeptide-like protein nlp-8. Acts upstream of egl-46 to prevent touch cell differentiation in FLP neurons. Plays a role in neuron differentiation by repressing the expression of zag-1 in FLP neurons, probably acting as a heterodimer with egl-46; because zag-1 represses expression of egl-46 and egl-44, together these proteins form a bistable, negative-feedback loop that regulates the choice between neuronal fates. Also promotes HSN neuron development. In association with egl-46, regulates cell cycle exit in the neuronal Q cell lineage. Plays a role in specifying commissural dendrites of the PVD nociceptive neurons, acting in concert with egl-46. May be involved in thermal stress response downstream of yap-1. This Caenorhabditis elegans protein is Transcription enhancer factor-like protein egl-44 (egl-44).